The following is a 181-amino-acid chain: Gastrokine-3 (181 aa).

The signal sequence occupies residues 1-20 (MKHLVASSILGVFVLTPSLA). Residues 53-145 (NNIFSEWDGI…MCRDDPTYFA (93 aa)) form the BRICHOS domain. Cys80 and Cys137 are oxidised to a cystine.

Belongs to the gastrokine family.

The protein resides in the secreted. May inhibit gastric epithelial cell proliferation. In Homo sapiens (Human), this protein is Gastrokine-3 (GKN3P).